A 156-amino-acid polypeptide reads, in one-letter code: Zinc finger SWIM domain-containing protein 7 homolog (156 aa).

Residues 82-120 form an SWIM-type zinc finger; sequence YMCLIQGDYCSCPSFNFSVLLKSDSVYCKHQISSILAEI.

It belongs to the SWS1 family.

The protein localises to the nucleus. Its function is as follows. May be involved in the homologous recombination repair (HRR) pathway of double-stranded DNA breaks arising during DNA replication or induced by DNA-damaging agents. This Dictyostelium discoideum (Social amoeba) protein is Zinc finger SWIM domain-containing protein 7 homolog (zswim7).